A 92-amino-acid polypeptide reads, in one-letter code: Small ribosomal subunit protein uS19c (92 aa).

It belongs to the universal ribosomal protein uS19 family.

It localises to the plastid. The protein resides in the chloroplast. Functionally, protein S19 forms a complex with S13 that binds strongly to the 16S ribosomal RNA. The sequence is that of Small ribosomal subunit protein uS19c from Daucus carota (Wild carrot).